Reading from the N-terminus, the 826-residue chain is MSEEELNNRDTESKQEHDENNSNFEAGSAHMNLPVLPLREVIFFPGDYLPIFIGRKGSIQAMDKALAETSENTGRMLLIAQKNPKKEIPEGKDLYEVGVIAKIAEPKINLQDGGVKLMVIVECRARAVNFRKSEGVLEADVLPIEEEESDNVDIEAYRRAVVQNFEKCVKLSETIPDEIIGLLSQIDSTSRIADLVTASINLKLSVKQEILETVDLLERIKKVHALLEKELGVLQVKQQIKEKTESQIKKSHKVYLLNEQLKAITKELYDKEGEEYDELVDLEKKIGNGKLSAEAKEKVSKELKKLKNMVPMSAEATVVRNYVDWIISLPWKKKGKMITDIAASERILKASHYGIEKVKERIIEYLAVQNRTKSFKGSILCLLGPPGVGKTSLASAIAEATGRPFVRMSLGGIKDESEIKGHRRTYIGAMPGKIIQHMKKAKLSNPVFLLDEIDKMSSDFRSDPAFALLEVLDPEQNAHFVDHYLEVEYDLSDVMFVATANSLNMIPALLDRLEIIRLEAYSEEEKLQIAEHYLIGKLQREHGLKKSEWSISKEALKLLIRRYTRESGVRNLKRELANLMRKAVKKLGVQSGLKSIEVSVKNLKKYAGVEKYTFGTAEPENLVGMTTGLAYTQTGGDLIMIEAVLLPGKGEIRSTGKLGEVMQESVQAAYSFVCSNCNKFGFTSKFFKSKDVHLHVPEGATSKDGPSAGVAICTSIVSVMTGIPVRSNVAMTGEVSLRGKVMEIGGLKEKLLAAVRGGIKIVLIPASNEKDLENIPKSVKNAVRIIPVSTVSEALTFTLAEQPTPLAVDVWPDIPLSSTQQSEQRV.

A compositionally biased stretch (basic and acidic residues) spans 1-20 (MSEEELNNRDTESKQEHDEN). Residues 1 to 27 (MSEEELNNRDTESKQEHDENNSNFEAG) form a disordered region. In terms of domain architecture, Lon N-terminal spans 33–231 (LPVLPLREVI…KVHALLEKEL (199 aa)). 384-391 (GPPGVGKT) contacts ATP. The Lon proteolytic domain maps to 620-801 (ENLVGMTTGL…SEALTFTLAE (182 aa)). Catalysis depends on residues Ser707 and Lys750.

Belongs to the peptidase S16 family. As to quaternary structure, homohexamer. Organized in a ring with a central cavity.

The protein localises to the cytoplasm. It carries out the reaction Hydrolysis of proteins in presence of ATP.. In terms of biological role, ATP-dependent serine protease that mediates the selective degradation of mutant and abnormal proteins as well as certain short-lived regulatory proteins. Required for cellular homeostasis and for survival from DNA damage and developmental changes induced by stress. Degrades polypeptides processively to yield small peptide fragments that are 5 to 10 amino acids long. Binds to DNA in a double-stranded, site-specific manner. The protein is Lon protease of Neorickettsia sennetsu (strain ATCC VR-367 / Miyayama) (Ehrlichia sennetsu).